A 448-amino-acid polypeptide reads, in one-letter code: Adenylosuccinate synthetase 1 (448 aa).

Residues 22–28 (GDEGKGK) and 50–52 (GHT) each bind GTP. The active-site Proton acceptor is the D23. 2 residues coordinate Mg(2+): D23 and G50. IMP-binding positions include 23–26 (DEGK), 48–51 (NAGH), T139, R153, Q234, T249, and R321. H51 serves as the catalytic Proton donor. Substrate is bound at residue 317–323 (SVTGRPR). GTP contacts are provided by residues R323, 349-351 (KLD), and 431-433 (STG).

The protein belongs to the adenylosuccinate synthetase family. As to quaternary structure, homodimer. It depends on Mg(2+) as a cofactor.

It localises to the cytoplasm. The catalysed reaction is IMP + L-aspartate + GTP = N(6)-(1,2-dicarboxyethyl)-AMP + GDP + phosphate + 2 H(+). Its pathway is purine metabolism; AMP biosynthesis via de novo pathway; AMP from IMP: step 1/2. Its function is as follows. Plays an important role in the de novo pathway of purine nucleotide biosynthesis. Catalyzes the first committed step in the biosynthesis of AMP from IMP. This Burkholderia lata (strain ATCC 17760 / DSM 23089 / LMG 22485 / NCIMB 9086 / R18194 / 383) protein is Adenylosuccinate synthetase 1.